The following is a 152-amino-acid chain: Transcriptional regulator MraZ (152 aa).

SpoVT-AbrB domains are found at residues Ile5–Gln52 and Ala81–Leu124.

Belongs to the MraZ family. In terms of assembly, forms oligomers.

Its subcellular location is the cytoplasm. The protein resides in the nucleoid. The protein is Transcriptional regulator MraZ of Legionella pneumophila (strain Paris).